The primary structure comprises 206 residues: Small ribosomal subunit protein uS4A (206 aa).

The S4 RNA-binding domain maps to 98 to 164; it reads MRLDNVVYKL…EKFKTFAENP (67 aa).

It belongs to the universal ribosomal protein uS4 family. Part of the 30S ribosomal subunit. Contacts protein S5. The interaction surface between S4 and S5 is involved in control of translational fidelity.

Its function is as follows. One of the primary rRNA binding proteins, it binds directly to 16S rRNA where it nucleates assembly of the body of the 30S subunit. With S5 and S12 plays an important role in translational accuracy. In Clostridium novyi (strain NT), this protein is Small ribosomal subunit protein uS4A.